Reading from the N-terminus, the 493-residue chain is Cysteine--tRNA ligase (493 aa).

Position 29 (Cys-29) interacts with Zn(2+). The short motif at 31–41 is the 'HIGH' region element; it reads VTVYDYCHIGH. 3 residues coordinate Zn(2+): Cys-209, His-234, and Glu-238. Positions 266 to 270 match the 'KMSKS' region motif; sequence KMSKS. Lys-269 is a binding site for ATP.

Belongs to the class-I aminoacyl-tRNA synthetase family. As to quaternary structure, monomer. Zn(2+) is required as a cofactor.

The protein localises to the cytoplasm. The enzyme catalyses tRNA(Cys) + L-cysteine + ATP = L-cysteinyl-tRNA(Cys) + AMP + diphosphate. In Pelobacter propionicus (strain DSM 2379 / NBRC 103807 / OttBd1), this protein is Cysteine--tRNA ligase.